We begin with the raw amino-acid sequence, 378 residues long: Chaperone protein DnaJ (378 aa).

One can recognise a J domain in the interval 5-69; it reads EYYDRLGVSK…QKRAAYDQYG (65 aa). The CR-type zinc-finger motif lies at 134–216; the sequence is GVEKEVSYNR…CHGTGHEKQA (83 aa). The Zn(2+) site is built by C147, C150, C164, C167, C190, C193, C204, and C207. CXXCXGXG motif repeat units follow at residues 147-154, 164-171, 190-197, and 204-211; these read CGTCLGSG, CRKCHGSG, CDICHGSG, and CQTCHGTG.

It belongs to the DnaJ family. In terms of assembly, homodimer. Zn(2+) is required as a cofactor.

Its subcellular location is the cytoplasm. Participates actively in the response to hyperosmotic and heat shock by preventing the aggregation of stress-denatured proteins and by disaggregating proteins, also in an autonomous, DnaK-independent fashion. Unfolded proteins bind initially to DnaJ; upon interaction with the DnaJ-bound protein, DnaK hydrolyzes its bound ATP, resulting in the formation of a stable complex. GrpE releases ADP from DnaK; ATP binding to DnaK triggers the release of the substrate protein, thus completing the reaction cycle. Several rounds of ATP-dependent interactions between DnaJ, DnaK and GrpE are required for fully efficient folding. Also involved, together with DnaK and GrpE, in the DNA replication of plasmids through activation of initiation proteins. This chain is Chaperone protein DnaJ, found in Streptococcus pyogenes serotype M6 (strain ATCC BAA-946 / MGAS10394).